The primary structure comprises 182 residues: Large ribosomal subunit protein bL19m (182 aa).

The transit peptide at 1-21 (MFNAKHFFNLGLGFQWLQKRG) directs the protein to the mitochondrion.

Belongs to the bacterial ribosomal protein bL19 family. Component of the mitochondrial large ribosomal subunit (mt-LSU). Mature yeast 74S mitochondrial ribosomes consist of a small (37S) and a large (54S) subunit. The 37S small subunit contains a 15S ribosomal RNA (15S mt-rRNA) and at least 32 different proteins. The 54S large subunit contains a 21S rRNA (21S mt-rRNA) and at least 45 different proteins.

Its subcellular location is the mitochondrion. Functionally, component of the mitochondrial ribosome (mitoribosome), a dedicated translation machinery responsible for the synthesis of mitochondrial genome-encoded proteins, including at least some of the essential transmembrane subunits of the mitochondrial respiratory chain. The mitoribosomes are attached to the mitochondrial inner membrane and translation products are cotranslationally integrated into the membrane. bL19m is essential for respiration. The polypeptide is Large ribosomal subunit protein bL19m (img1) (Schizosaccharomyces pombe (strain 972 / ATCC 24843) (Fission yeast)).